Reading from the N-terminus, the 230-residue chain is MTLVTEVEAQAWLREVLHVDDASMSRLAHLVDLLLAENERQNLVARGTLPHVWVRHIVDSAQLLHVSRETSGSGEWLDLGTGAGFPGLVIAAIQSDRPVTLVDSRRLRTEWLQRAADALELSNVRVILSRVEDLESGAYAAISARAFAPLDKLLAISARFSTPDTLWLLPKGAGAQHELQMLPESWHHMFHVEQSLTDPAAGIIVGRLLAGKQPAPHVSRQQAPRKGKRT.

Residues Gly80, Phe85, 131 to 132 (VE), and Arg145 contribute to the S-adenosyl-L-methionine site.

This sequence belongs to the methyltransferase superfamily. RNA methyltransferase RsmG family.

It localises to the cytoplasm. It catalyses the reaction guanosine(527) in 16S rRNA + S-adenosyl-L-methionine = N(7)-methylguanosine(527) in 16S rRNA + S-adenosyl-L-homocysteine. Its function is as follows. Specifically methylates the N7 position of guanine in position 527 of 16S rRNA. The sequence is that of Ribosomal RNA small subunit methyltransferase G from Novosphingobium aromaticivorans (strain ATCC 700278 / DSM 12444 / CCUG 56034 / CIP 105152 / NBRC 16084 / F199).